The primary structure comprises 310 residues: 5'-adenylylsulfate reductase-like 4 (310 aa).

The N-terminal stretch at 1–22 (MEKEILLLLLVIMFLTVADVDA) is a signal peptide. The Thioredoxin domain occupies 49–168 (GVESDERPRF…LVAFYSDVTG (120 aa)). 2 N-linked (GlcNAc...) asparagine glycosylation sites follow: Asn-143 and Asn-190. A helical transmembrane segment spans residues 217-237 (LAIVFVLLRLLHLIYPTLVVF).

It is found in the membrane. The protein is 5'-adenylylsulfate reductase-like 4 (APRL4) of Arabidopsis thaliana (Mouse-ear cress).